The primary structure comprises 1357 residues: DNA-directed RNA polymerase subunit beta (1357 aa).

The protein belongs to the RNA polymerase beta chain family. In terms of assembly, the RNAP catalytic core consists of 2 alpha, 1 beta, 1 beta' and 1 omega subunit. When a sigma factor is associated with the core the holoenzyme is formed, which can initiate transcription.

It catalyses the reaction RNA(n) + a ribonucleoside 5'-triphosphate = RNA(n+1) + diphosphate. Its function is as follows. DNA-dependent RNA polymerase catalyzes the transcription of DNA into RNA using the four ribonucleoside triphosphates as substrates. In Pseudomonas syringae pv. syringae (strain B728a), this protein is DNA-directed RNA polymerase subunit beta.